Reading from the N-terminus, the 1316-residue chain is DNA-directed RNA polymerase subunit beta' (1316 aa).

Zn(2+) contacts are provided by Cys60, Cys62, Cys75, and Cys78. Positions 535, 537, and 539 each coordinate Mg(2+). Zn(2+)-binding residues include Cys891, Cys968, Cys975, and Cys978.

Belongs to the RNA polymerase beta' chain family. As to quaternary structure, the RNAP catalytic core consists of 2 alpha, 1 beta, 1 beta' and 1 omega subunit. When a sigma factor is associated with the core the holoenzyme is formed, which can initiate transcription. It depends on Mg(2+) as a cofactor. Requires Zn(2+) as cofactor.

It carries out the reaction RNA(n) + a ribonucleoside 5'-triphosphate = RNA(n+1) + diphosphate. In terms of biological role, DNA-dependent RNA polymerase catalyzes the transcription of DNA into RNA using the four ribonucleoside triphosphates as substrates. This is DNA-directed RNA polymerase subunit beta' from Mycobacterium avium (strain 104).